The chain runs to 878 residues: uncharacterized protein (878 aa).

4 disordered regions span residues isoleucine 58–phenylalanine 223, lysine 306–arginine 494, lysine 585–leucine 652, and proline 679–glycine 709. Low complexity-rich tracts occupy residues asparagine 64–serine 213, serine 314–serine 325, and isoleucine 335–asparagine 355. Polar residues predominate over residues arginine 362–valine 372. Residues asparagine 373–arginine 494 are compositionally biased toward low complexity. Over residues lysine 585–glutamine 595 the composition is skewed to basic and acidic residues. The span at lysine 596–glutamine 605 shows a compositional bias: low complexity. Acidic residues predominate over residues threonine 615 to glutamate 624. 2 stretches are compositionally biased toward low complexity: residues asparagine 639–leucine 652 and proline 679–serine 704.

This is an uncharacterized protein from Dictyostelium discoideum (Social amoeba).